Reading from the N-terminus, the 492-residue chain is GTPase Der (492 aa).

EngA-type G domains lie at 3–166 and 205–378; these read PVVA…MDDV and IKLA…DSST. GTP-binding positions include 9–16, 56–60, 118–121, 211–218, 258–262, and 323–326; these read GRPNVGKS, DTGGI, NKTD, DTAGV, and NKWD. Positions 379-463 constitute a KH-like domain; the sequence is RRVSTALLTR…PIRIQFKEGA (85 aa).

The protein belongs to the TRAFAC class TrmE-Era-EngA-EngB-Septin-like GTPase superfamily. EngA (Der) GTPase family. Associates with the 50S ribosomal subunit.

Functionally, GTPase that plays an essential role in the late steps of ribosome biogenesis. The polypeptide is GTPase Der (Cronobacter sakazakii (strain ATCC BAA-894) (Enterobacter sakazakii)).